The chain runs to 266 residues: 3-methyl-2-oxobutanoate hydroxymethyltransferase (266 aa).

Mg(2+) contacts are provided by Asp-45 and Asp-84. 3-methyl-2-oxobutanoate contacts are provided by residues 45 to 46 (DS), Asp-84, and Lys-113. Glu-115 is a Mg(2+) binding site. The active-site Proton acceptor is the Glu-183.

It belongs to the PanB family. Homodecamer; pentamer of dimers. Requires Mg(2+) as cofactor.

It is found in the cytoplasm. The catalysed reaction is 3-methyl-2-oxobutanoate + (6R)-5,10-methylene-5,6,7,8-tetrahydrofolate + H2O = 2-dehydropantoate + (6S)-5,6,7,8-tetrahydrofolate. The protein operates within cofactor biosynthesis; (R)-pantothenate biosynthesis; (R)-pantoate from 3-methyl-2-oxobutanoate: step 1/2. Functionally, catalyzes the reversible reaction in which hydroxymethyl group from 5,10-methylenetetrahydrofolate is transferred onto alpha-ketoisovalerate to form ketopantoate. This is 3-methyl-2-oxobutanoate hydroxymethyltransferase from Coxiella burnetii (strain CbuG_Q212) (Coxiella burnetii (strain Q212)).